The primary structure comprises 365 residues: HLA class I histocompatibility antigen, A alpha chain (365 aa).

Residues 1 to 24 form the signal peptide; sequence MAVMAPRTLLLLLSGALALTQTWA. Positions 3-11 are VL9 epitope; that stretch reads VMAPRTLLL. Residues 25–114 form an alpha-1 region; that stretch reads GSHSMRYFFT…LRGYYNQSEA (90 aa). The Extracellular portion of the chain corresponds to 25–308; the sequence is GSHSMRYFFT…ELSSQPTIPI (284 aa). Position 31 (Tyr31) interacts with a peptide antigen. The residue at position 83 (Tyr83) is a Sulfotyrosine. A peptide antigen-binding residues include Thr97 and Tyr108. A glycan (N-linked (GlcNAc...) asparagine) is linked at Asn110. An alpha-2 region spans residues 115 to 206; the sequence is GSHTIQIMYG…ENGKETLQRT (92 aa). A disulfide bond links Cys125 and Cys188. A peptide antigen is bound by residues Asp140, Thr167, Lys170, Tyr183, and Tyr195. Residues 207-298 form an alpha-3 region; that stretch reads DPPKTHMTHH…GLPKPLTLRW (92 aa). One can recognise an Ig-like C1-type domain in the interval 209–295; it reads PKTHMTHHPI…QHEGLPKPLT (87 aa). Cysteines 227 and 283 form a disulfide. Positions 299–308 are connecting peptide; sequence ELSSQPTIPI. Residues 309–332 form a helical membrane-spanning segment; sequence VGIIAGLVLLGAVITGAVVAAVMW. The Cytoplasmic segment spans residues 333–365; that stretch reads RRKSSDRKGGSYTQAASSDSAQGSDVSLTACKV. Positions 339-365 are disordered; it reads RKGGSYTQAASSDSAQGSDVSLTACKV. Ser343 bears the Phosphoserine mark. Tyr344 is modified (phosphotyrosine). Low complexity predominate over residues 346-359; it reads QAASSDSAQGSDVS. A phosphoserine mark is found at Ser349, Ser350, Ser352, Ser356, and Ser359.

Belongs to the MHC class I family. Heterotrimer that consists of an alpha chain HLA-A, a beta chain B2M and a peptide (peptide-HLA-A-B2M). Early in biogenesis, HLA-A-B2M dimer interacts with the components of the peptide-loading complex composed of TAPBP, TAP1-TAP2, TAPBPL, PDIA3/ERP57 and CALR. Interacts with TAP1-TAP2 transporter via TAPBP; this interaction is obligatory for the loading of peptide epitopes delivered to the ER by TAP1-TAP2 transporter. Interacts with TAPBPL; TAPBPL binds peptide-free HLA-A-B2M complexes or those loaded with low affinity peptides, likely facilitating peptide exchange for higher affinity peptides. Only optimally assembled peptide-HLA-B2M trimer translocates to the surface of antigen-presenting cells, where it interacts with TCR and CD8 coreceptor on the surface of T cells. HLA-A (via polymorphic alpha-1 and alpha-2 domains) interacts with antigen-specific TCR (via CDR3 domains). One HLA-A molecule (mainly via nonpolymorphic alpha-3 domain) interacts with one CD8A homodimer (via CDR-like loop); this interaction ensures peptide-HLA-A-B2M recognition by CD8-positive T cells only. Alleles A*23:01; A*24:02 and A*32:01 interact (via Bw4 motif) with KIR3DL1 on NK cells; this interaction is direct. In terms of assembly, (Microbial infection) Interacts with HHV-8 MIR1 protein. As to quaternary structure, (Microbial infection) Interacts with HTLV-1 accessory protein p12I. In terms of processing, (Microbial infection) Polyubiquitinated in a post ER compartment by interaction with human herpesvirus 8 MIR1 protein. This targets the protein for rapid degradation via the ubiquitin system. Post-translationally, N-linked glycosylation at Asn-110. In terms of tissue distribution, ubiquitous.

It localises to the cell membrane. The protein localises to the endoplasmic reticulum membrane. In terms of biological role, antigen-presenting major histocompatibility complex class I (MHCI) molecule. In complex with B2M/beta 2 microglobulin displays primarily viral and tumor-derived peptides on antigen-presenting cells for recognition by alpha-beta T cell receptor (TCR) on HLA-A-restricted CD8-positive T cells, guiding antigen-specific T cell immune response to eliminate infected or transformed cells. May also present self-peptides derived from the signal sequence of secreted or membrane proteins, although T cells specific for these peptides are usually inactivated to prevent autoreactivity. Both the peptide and the MHC molecule are recognized by TCR, the peptide is responsible for the fine specificity of antigen recognition and MHC residues account for the MHC restriction of T cells. Typically presents intracellular peptide antigens of 8 to 13 amino acids that arise from cytosolic proteolysis via IFNG-induced immunoproteasome or via endopeptidase IDE/insulin-degrading enzyme. Can bind different peptides containing allele-specific binding motifs, which are mainly defined by anchor residues at position 2 and 9. Allele A*01:01: Presents a restricted peptide repertoire including viral epitopes derived from IAV NP/nucleoprotein (CTELKLSDY), IAV PB1/polymerase basic protein 1 (VSDGGPNLY), HAdV-11 capsid L3/hexon protein (LTDLGQNLLY), SARS-CoV-2 3a/ORF3a (FTSDYYQLY) as well as tumor peptide antigens including MAGE1 (EADPTGHSY), MAGEA3 (EVDPIGHLY) and WT1 (TSEKRPFMCAY), all having in common a canonical motif with a negatively charged Asp or Glu residue at position 3 and a Tyr anchor residue at the C-terminus. A number of HLA-A*01:01-restricted peptides carry a post-translational modification with oxidation and N-terminal acetylation being the most frequent. Fails to present highly immunogenic peptides from the EBV latent antigens. Functionally, allele A*02:01: A major allele in human populations, presents immunodominant viral epitopes derived from IAV M/matrix protein 1 (GILGFVFTL), HIV-1 env (TLTSCNTSV), HIV-1 gag-pol (ILKEPVHGV), HTLV-1 Tax (LLFGYPVYV), HBV C/core antigen (FLPSDFFPS), HCMV UL83/pp65 (NLVPMVATV) as well as tumor peptide antigens including MAGEA4 (GVYDGREHTV), WT1 (RMFPNAPYL) and CTAG1A/NY-ESO-1 (SLLMWITQC), all having in common hydrophobic amino acids at position 2 and at the C-terminal anchors. Its function is as follows. Allele A*03:01: Presents viral epitopes derived from IAV NP (ILRGSVAHK), HIV-1 nef (QVPLRPMTYK), HIV-1 gag-pol (AIFQSSMTK), SARS-CoV-2 N/nucleoprotein (KTFPPTEPK) as well as tumor peptide antigens including PMEL (LIYRRRLMK), NODAL (HAYIQSLLK), TRP-2 (RMYNMVPFF), all having in common hydrophobic amino acids at position 2 and Lys or Arg anchor residues at the C-terminus. May also display spliced peptides resulting from the ligation of two separate proteasomal cleavage products that are not contiguous in the parental protein. In terms of biological role, allele A*11:01: Presents several immunodominant epitopes derived from HIV-1 gag-pol and HHV-4 EBNA4, containing the peptide motif with Val, Ile, Thr, Leu, Tyr or Phe at position 2 and Lys anchor residue at the C-terminus. Important in the control of HIV-1, EBV and HBV infections. Presents an immunodominant epitope derived from SARS-CoV-2 N/nucleoprotein (KTFPPTEPK). Allele A*23:01: Interacts with natural killer (NK) cell receptor KIR3DL1 and may contribute to functional maturation of NK cells and self-nonself discrimination during innate immune response. Functionally, allele A*24:02: Presents viral epitopes derived from HIV-1 nef (RYPLTFGWCF), EBV lytic- and latent-cycle antigens BRLF1 (TYPVLEEMF), BMLF1 (DYNFVKQLF) and LMP2 (IYVLVMLVL), SARS-CoV nucleocapsid/N (QFKDNVILL), as well as tumor peptide antigens including PRAME (LYVDSLFFL), all sharing a common signature motif, namely an aromatic residue Tyr or Phe at position 2 and a nonhydrophobic anchor residue Phe, Leu or Iso at the C-terminus. Interacts with natural killer (NK) cell receptor KIR3DL1 and may contribute to functional maturation of NK cells and self-nonself discrimination during innate immune response. Its function is as follows. Allele A*26:01: Presents several epitopes derived from HIV-1 gag-pol (EVIPMFSAL, ETKLGKAGY) and env (LVSDGGPNLY), carrying as anchor residues preferentially Glu at position 1, Val or Thr at position 2 and Tyr at the C-terminus. In terms of biological role, allele A*29:02: Presents peptides having a common motif, namely a Glu residue at position 2 and Tyr or Leu anchor residues at the C-terminus. Allele A*32:01: Interacts with natural killer (NK) cell receptor KIR3DL1 and may contribute to functional maturation of NK cells and self-nonself discrimination during innate immune response. Functionally, allele A*68:01: Presents viral epitopes derived from IAV NP (KTGGPIYKR) and HIV-1 tat (ITKGLGISYGR), having a common signature motif namely, Val or Thr at position 2 and positively charged residues Arg or Lys at the C-terminal anchor. Its function is as follows. Allele A*74:01: Presents immunodominant HIV-1 epitopes derived from gag-pol (GQMVHQAISPR, QIYPGIKVR) and rev (RQIHSISER), carrying an aliphatic residue at position 2 and Arg anchor residue at the C-terminus. May contribute to viral load control in chronic HIV-1 infection. The protein is HLA class I histocompatibility antigen, A alpha chain of Homo sapiens (Human).